We begin with the raw amino-acid sequence, 500 residues long: MEVSSRPPSNFDPGNYVEMSDPTTTHLPSKVVIQDLTTELHCPLCNDWFRDPLMLTCGHNFCQDCIQSFWKVHSKETFCPDCKMLCQYSNCTFNLVLEKLVEKIKKLPLLKGHPQCPEHGENLKLFSKPEGKMICFQCKDARLSMGQSKDFLQISEAVRFFTEELAIYQSQLQTTLKELQSLRTIQKDAISAYKDNKIQLQQNLSLEFLKLHQFLHNKEKDILNDLRDEGKLLNEEMEVNLNQIQEQCLVAKDMLATIQARMEQQNSFDFLTDITKLIESMEKGMKTIVPRQLIAKKLSLGRFKGPIQYIIWKEMQAILSPGPSQLTLDPKTAHPNLVLSKSQTSVCHCDVKQVMPDDPERFDSSVAVLGSKGFTSGKWYWEIEVGKKTKWTIGVVRESIIRKGSCPLTPEQGFWLLRLRNQTDLKALDLPSRSLTLGDLRRVGVYLDYEGGQVSFYNATTMTHLYTFSSVFQEKLFPYLCPCLNDGGENKEPLHIVHPQ.

Residues Met1–Pro22 form a disordered region. Residues Met1–Gln153 are necessary for nuclear localization. The RING-type zinc-finger motif lies at Cys42 to Lys83. Positions Asn217 to Ala256 form a coiled coil. The B30.2/SPRY domain maps to Pro306–Gln500. Position 342 is a phosphoserine (Ser342).

It belongs to the TRIM/RBCC family. As to quaternary structure, homo-multimer; required for antiviral activity. Interacts with PML. In terms of processing, phosphorylated. Phosphorylation is necessary for nuclear localization. In terms of tissue distribution, expressed in spermatid.

The protein resides in the cytoplasm. It is found in the nucleus. The protein localises to the nucleus speckle. Its subcellular location is the cytoskeleton. It localises to the microtubule organizing center. The protein resides in the centrosome. The enzyme catalyses S-ubiquitinyl-[E2 ubiquitin-conjugating enzyme]-L-cysteine + [acceptor protein]-L-lysine = [E2 ubiquitin-conjugating enzyme]-L-cysteine + N(6)-ubiquitinyl-[acceptor protein]-L-lysine.. It functions in the pathway protein modification; protein ubiquitination. In terms of biological role, E3 ubiquitin ligase that plays an important role in antiviral immunity by restricting different viral infections including dengue virus or vesicular stomatitis indiana virus. Ubiquitinates viral proteins such as dengue virus NS3 thereby limiting infection. In addition, acts as a key mediator of type I interferon induced microtubule stabilization by directly associating to microtubules independently of its E3 ligase activity. Also plays a role in cataract formation together with TP53. Mechanistically, inhibits UVB-induced cell apoptosis and reactive oxygen species (ROS) production by inducing TP53 ubiquitination. Regulates centrosome dynamics and mitotic progression by ubiquitinating STK3/MST2; leading to its redistribution to the perinuclear cytoskeleton and subsequent phosphorylation by PLK1. The sequence is that of E3 ubiquitin-protein ligase TRIM69 (Trim69) from Mus musculus (Mouse).